The following is a 307-amino-acid chain: Malonyl-[acyl-carrier protein] O-methyltransferase (307 aa).

The protein belongs to the methyltransferase superfamily.

It carries out the reaction malonyl-[ACP] + S-adenosyl-L-methionine = malonyl-[ACP] methyl ester + S-adenosyl-L-homocysteine. It functions in the pathway cofactor biosynthesis; biotin biosynthesis. In terms of biological role, converts the free carboxyl group of a malonyl-thioester to its methyl ester by transfer of a methyl group from S-adenosyl-L-methionine (SAM). It allows to synthesize pimeloyl-ACP via the fatty acid synthetic pathway. This is Malonyl-[acyl-carrier protein] O-methyltransferase from Nitrosospira multiformis (strain ATCC 25196 / NCIMB 11849 / C 71).